Reading from the N-terminus, the 146-residue chain is Hemoglobin subunit beta (146 aa).

At Val-1 the chain carries N-acetylvaline. The region spanning 2 to 146 is the Globin domain; sequence HLTGEEKSAV…VANALAHKYH (145 aa). A Phosphothreonine modification is found at Thr-12. Residue Ser-44 is modified to Phosphoserine. The residue at position 59 (Lys-59) is an N6-acetyllysine. Residue His-63 coordinates heme b. An N6-acetyllysine modification is found at Lys-82. His-92 lines the heme b pocket. An S-nitrosocysteine modification is found at Cys-93. Lys-144 carries the post-translational modification N6-acetyllysine.

The protein belongs to the globin family. As to quaternary structure, heterotetramer of two alpha chains and two beta chains. Red blood cells.

Involved in oxygen transport from the lung to the various peripheral tissues. This chain is Hemoglobin subunit beta (HBB), found in Mico argentatus (Silvery marmoset).